A 206-amino-acid chain; its full sequence is Small ribosomal subunit protein uS4 (206 aa).

Residues glycine 96–lysine 156 enclose the S4 RNA-binding domain.

This sequence belongs to the universal ribosomal protein uS4 family. As to quaternary structure, part of the 30S ribosomal subunit. Contacts protein S5. The interaction surface between S4 and S5 is involved in control of translational fidelity.

One of the primary rRNA binding proteins, it binds directly to 16S rRNA where it nucleates assembly of the body of the 30S subunit. In terms of biological role, with S5 and S12 plays an important role in translational accuracy. The polypeptide is Small ribosomal subunit protein uS4 (Pasteurella multocida (strain Pm70)).